Consider the following 550-residue polypeptide: Arginine--tRNA ligase (550 aa).

Positions 124–134 match the 'HIGH' region motif; sequence ANPTGPLHVGH.

The protein belongs to the class-I aminoacyl-tRNA synthetase family. As to quaternary structure, monomer.

It is found in the cytoplasm. The enzyme catalyses tRNA(Arg) + L-arginine + ATP = L-arginyl-tRNA(Arg) + AMP + diphosphate. The protein is Arginine--tRNA ligase of Desulfovibrio desulfuricans (strain ATCC 27774 / DSM 6949 / MB).